Here is a 573-residue protein sequence, read N- to C-terminus: FAD-dependent monooxygenase resA (573 aa).

A signal peptide spans 1-17 (MYDVIVIGAGWCGLVAA). Ile106 serves as a coordination point for FAD. Asn235 is a glycosylation site (N-linked (GlcNAc...) asparagine).

This sequence belongs to the FAD-binding monooxygenase family. The cofactor is FAD.

The protein operates within antifungal biosynthesis. FAD-dependent monooxygenase; part of the gene cluster that mediates the biosynthesis of the tetrahydropyranyl antifungal agent restricticin that acts as an inhibitor of CYP51 and blocks the ergosterol biosynthesis. The highly reducing polyketide synthase resH, the short chain dehydrogenase resG, the cyclase resF, the FAD-dependent monooxygenase resA and the enoylreductase resD are required to generate the first stable intermediate desmethylrestrictinol. ResH with resD biosynthesize the first polyketide chain intermediate that is reduced by resG, followed by epoxidation by resA before 6-endo cyclization via epoxide opening by resF leads to desmethylrestrictinol. The methyltransferase resE then catalyzes the C4 O-methylation of desmethylrestrictinol to produce restrictinol, and the nonribosomal peptide synthetase resC catalyzes the C3 esterification of restrictinol with glycine that leads to restricticin. This chain is FAD-dependent monooxygenase resA, found in Aspergillus sclerotiorum.